Reading from the N-terminus, the 197-residue chain is Transposon Tn552 resolvase (197 aa).

The Resolvase/invertase-type recombinase catalytic domain occupies 1–136 (MKIGYARVST…AGRIAARARG (136 aa)). Catalysis depends on S9, which acts as the O-(5'-phospho-DNA)-serine intermediate. A DNA-binding region (H-T-H motif) is located at residues 163 to 182 (IKTIAEQWQVSRTTIYRYLN).

It belongs to the site-specific recombinase resolvase family.

Functionally, resolvase catalyzes the resolution (a site-specific recombination) of the cointegrated replicon to yield the final transposition products. The chain is Transposon Tn552 resolvase (tnpR) from Staphylococcus aureus.